Here is a 95-residue protein sequence, read N- to C-terminus: uncharacterized protein (95 aa).

Residues 2–92 (VREAAMLHIK…YTPFPTVEHF (91 aa)) form the ABM domain.

This is an uncharacterized protein from Bacillus subtilis (strain 168).